The chain runs to 153 residues: UPF0756 membrane protein LSL_0936 (153 aa).

The next 5 membrane-spanning stretches (helical) occupy residues 4-24 (WIFLGLILLIAYLGKNSSLLI), 26-46 (GAVVIVIKLFPFLSQKLYPVI), 51-71 (INWGVTIISVAILIPIATGQI), 86-106 (WIAVVCGILVAILSKHGVNLL), and 116-136 (LVIGTIIGVVFLKGVAAGPVI).

Belongs to the UPF0756 family.

The protein localises to the cell membrane. The chain is UPF0756 membrane protein LSL_0936 from Ligilactobacillus salivarius (strain UCC118) (Lactobacillus salivarius).